Reading from the N-terminus, the 1740-residue chain is DNA polymerase (1740 aa).

The interval Ile472–Asp491 is disordered. Acidic residues predominate over residues Asp480–Asp491. The region spanning Val1189–Tyr1334 is the DOD-type homing endonuclease domain. Positions Pro1673–Ile1701 are disordered. A compositionally biased stretch (polar residues) spans Tyr1685 to Gln1700.

Belongs to the DNA polymerase type-B family. In terms of processing, this protein undergoes a protein self splicing that involves a post-translational excision of the intervening region (intein) followed by peptide ligation.

It catalyses the reaction DNA(n) + a 2'-deoxyribonucleoside 5'-triphosphate = DNA(n+1) + diphosphate. The sequence is that of DNA polymerase (POLB) from Acanthamoeba polyphaga (Amoeba).